The primary structure comprises 76 residues: KANTR integral membrane protein (76 aa).

Residues 1–25 (MSPFSLLILVICAFSLFFLINLTRG) form the signal peptide. The Extracellular portion of the chain corresponds to 26–34 (LSILLVFSK). The chain crosses the membrane as a helical span at residues 35–55 (NQLLALLLLSIVSLFSISLIS). Over 56–76 (ALIFFDLLPSTFFGFILLFFF) the chain is Cytoplasmic.

It localises to the membrane. In Homo sapiens (Human), this protein is KANTR integral membrane protein.